Reading from the N-terminus, the 364-residue chain is Dihydroorotate dehydrogenase (quinone) (364 aa).

FMN is bound by residues 61–65 (AGFDK) and serine 85. Lysine 65 provides a ligand contact to substrate. 110 to 114 (NRMGF) contacts substrate. Residues asparagine 139 and asparagine 170 each coordinate FMN. Substrate is bound at residue asparagine 170. Serine 173 serves as the catalytic Nucleophile. Asparagine 175 is a binding site for substrate. FMN contacts are provided by lysine 214 and serine 242. 243-244 (NT) serves as a coordination point for substrate. FMN contacts are provided by residues glycine 266, glycine 295, and 316-317 (YS).

Belongs to the dihydroorotate dehydrogenase family. Type 2 subfamily. Monomer. FMN is required as a cofactor.

Its subcellular location is the cell membrane. The enzyme catalyses (S)-dihydroorotate + a quinone = orotate + a quinol. The protein operates within pyrimidine metabolism; UMP biosynthesis via de novo pathway; orotate from (S)-dihydroorotate (quinone route): step 1/1. Catalyzes the conversion of dihydroorotate to orotate with quinone as electron acceptor. The protein is Dihydroorotate dehydrogenase (quinone) of Bradyrhizobium sp. (strain ORS 278).